We begin with the raw amino-acid sequence, 393 residues long: Digeranylgeranylglycerophospholipid reductase (393 aa).

Ala13, Asp32, Cys43, Ala44, Gly46, Arg95, Val119, Asp274, and Gly286 together coordinate FAD. A 2,3-bis-O-(geranylgeranyl)-sn-glycerol 1-phospholipid contacts are provided by Lys327 and Gly363.

It belongs to the geranylgeranyl reductase family. DGGGPL reductase subfamily. FAD is required as a cofactor.

It carries out the reaction a 2,3-bis-O-phytanyl-sn-glycerol 1-phospholipid + 8 A = a 2,3-bis-O-(geranylgeranyl)-sn-glycerol 1-phospholipid + 8 AH2. The enzyme catalyses 2,3-bis-O-(phytanyl)-sn-glycerol 1-phosphate + 8 A = 2,3-bis-O-(geranylgeranyl)-sn-glycerol 1-phosphate + 8 AH2. It catalyses the reaction CDP-2,3-bis-O-(geranylgeranyl)-sn-glycerol + 8 AH2 = CDP-2,3-bis-O-(phytanyl)-sn-glycerol + 8 A. The catalysed reaction is archaetidylserine + 8 AH2 = 2,3-bis-O-phytanyl-sn-glycero-3-phospho-L-serine + 8 A. The protein operates within membrane lipid metabolism; glycerophospholipid metabolism. Functionally, is involved in the reduction of 2,3-digeranylgeranylglycerophospholipids (unsaturated archaeols) into 2,3-diphytanylglycerophospholipids (saturated archaeols) in the biosynthesis of archaeal membrane lipids. Catalyzes the formation of archaetidic acid (2,3-di-O-phytanyl-sn-glyceryl phosphate) from 2,3-di-O-geranylgeranylglyceryl phosphate (DGGGP) via the hydrogenation of each double bond of the isoprenoid chains. Is also probably able to reduce double bonds of geranyl groups in CDP-2,3-bis-O-(geranylgeranyl)-sn-glycerol and archaetidylserine, thus acting at various stages in the biosynthesis of archaeal membrane lipids. This is Digeranylgeranylglycerophospholipid reductase from Pyrococcus furiosus (strain ATCC 43587 / DSM 3638 / JCM 8422 / Vc1).